The primary structure comprises 326 residues: 5-dehydro-2-deoxygluconokinase (326 aa).

The protein belongs to the carbohydrate kinase PfkB family.

The enzyme catalyses 5-dehydro-2-deoxy-D-gluconate + ATP = 6-phospho-5-dehydro-2-deoxy-D-gluconate + ADP + H(+). Its pathway is polyol metabolism; myo-inositol degradation into acetyl-CoA; acetyl-CoA from myo-inositol: step 5/7. In terms of biological role, catalyzes the phosphorylation of 5-dehydro-2-deoxy-D-gluconate (2-deoxy-5-keto-D-gluconate or DKG) to 6-phospho-5-dehydro-2-deoxy-D-gluconate (DKGP). This Shouchella clausii (strain KSM-K16) (Alkalihalobacillus clausii) protein is 5-dehydro-2-deoxygluconokinase.